The primary structure comprises 328 residues: Probable membrane-associated kinase regulator 4 (328 aa).

Residues 213-253 (GQIKTERPKKQSNGSVSGSHRRSFSVSMRRQAAKSSNNKSS) are disordered. Over residues 223-240 (QSNGSVSGSHRRSFSVSM) the composition is skewed to polar residues.

The protein resides in the cell membrane. In Arabidopsis thaliana (Mouse-ear cress), this protein is Probable membrane-associated kinase regulator 4 (MAKR4).